We begin with the raw amino-acid sequence, 123 residues long: Basic phospholipase A2 Ph-TX1 (123 aa).

The Ca(2+) site is built by Tyr27, Gly29, and Gly31. 6 disulfide bridges follow: Cys28/Cys45, Cys44/Cys96, Cys50/Cys123, Cys51/Cys89, Cys59/Cys83, and Cys77/Cys87. His48 is an active-site residue. Residue Asp49 coordinates Ca(2+). Residue Asp90 is part of the active site.

Belongs to the phospholipase A2 family. Group II subfamily. D49 sub-subfamily. Monomer. Requires Ca(2+) as cofactor. As to expression, expressed by the venom gland.

The protein resides in the secreted. The catalysed reaction is a 1,2-diacyl-sn-glycero-3-phosphocholine + H2O = a 1-acyl-sn-glycero-3-phosphocholine + a fatty acid + H(+). With respect to regulation, inhibited by divalent cations different from calcium ions (cadmium, magnesium, manganese, zinc), since they act as competitive antagonists of this cofactor. Functionally, snake venom phospholipase A2 (PLA2) that induces in vivo myotoxicity, moderates footpad edema, and causes in vitro neuromuscular blockade. PLA2 catalyzes the calcium-dependent hydrolysis of the 2-acyl groups in 3-sn-phosphoglycerides. In Bothrocophias hyoprora (Amazonian hognose viper), this protein is Basic phospholipase A2 Ph-TX1.